Consider the following 427-residue polypeptide: Glutamate-1-semialdehyde 2,1-aminomutase (427 aa).

Lysine 264 carries the N6-(pyridoxal phosphate)lysine modification.

This sequence belongs to the class-III pyridoxal-phosphate-dependent aminotransferase family. HemL subfamily. Homodimer. Pyridoxal 5'-phosphate is required as a cofactor.

The protein resides in the cytoplasm. The enzyme catalyses (S)-4-amino-5-oxopentanoate = 5-aminolevulinate. It participates in porphyrin-containing compound metabolism; protoporphyrin-IX biosynthesis; 5-aminolevulinate from L-glutamyl-tRNA(Glu): step 2/2. This is Glutamate-1-semialdehyde 2,1-aminomutase from Campylobacter concisus (strain 13826).